Reading from the N-terminus, the 223-residue chain is Probable transaldolase (223 aa).

Lys83 (schiff-base intermediate with substrate) is an active-site residue.

Belongs to the transaldolase family. Type 3B subfamily.

It is found in the cytoplasm. The enzyme catalyses D-sedoheptulose 7-phosphate + D-glyceraldehyde 3-phosphate = D-erythrose 4-phosphate + beta-D-fructose 6-phosphate. It functions in the pathway carbohydrate degradation; pentose phosphate pathway; D-glyceraldehyde 3-phosphate and beta-D-fructose 6-phosphate from D-ribose 5-phosphate and D-xylulose 5-phosphate (non-oxidative stage): step 2/3. Functionally, transaldolase is important for the balance of metabolites in the pentose-phosphate pathway. This is Probable transaldolase from Myxococcus xanthus (strain DK1622).